A 340-amino-acid chain; its full sequence is Annexin A2-B (340 aa).

The tract at residues 2–25 (ALIHEILGKLSLEGNQSSSRQSKL) is P10 binding site. A Phosphoserine; by PKC modification is found at Ser-27. Annexin repeat units lie at residues 34 to 105 (FDAE…GLIK), 106 to 177 (TRPQ…ALAK), 190 to 262 (EKID…NLVQ), and 266 to 337 (NKPL…NLCG).

The protein belongs to the annexin family. In terms of assembly, tetramer of 2 light chains (p10 proteins) and 2 heavy chains (p36 proteins). In terms of tissue distribution, adult brain, heart, striated muscle, liver, kidney, and very high levels in skin.

It is found in the secreted. Its subcellular location is the extracellular space. It localises to the extracellular matrix. The protein localises to the basement membrane. In terms of biological role, calcium-regulated membrane-binding protein whose affinity for calcium is greatly enhanced by anionic phospholipids. It binds two calcium ions with high affinity. The sequence is that of Annexin A2-B (anxa2-b) from Xenopus laevis (African clawed frog).